The following is a 1253-amino-acid chain: Latent-transforming growth factor beta-binding protein 3 (1253 aa).

Residues 1 to 38 (MPGPRGAAHGLAPAMRQAGALGLLALLLLALLGPGGGA) form the signal peptide. N-linked (GlcNAc...) asparagine glycosylation occurs at asparagine 86. The EGF-like 1 domain maps to 106–138 (RVVVCPLPCMNGGQCSSRNQCLCPPDFTGRFCQ). Disulfide bonds link cysteine 110–cysteine 120, cysteine 114–cysteine 126, and cysteine 128–cysteine 137. A disordered region spans residues 244–270 (GPNAEGPASSQHLLPHPKPQHPRPPTQ). Positions 274–328 (GRCFQDTLPKQPCGSNPLPGLTKQEDCCGSIGTAWGQSKCHKCPQLQYTGVQKPG) constitute a TB 1 domain. 3 cysteine pairs are disulfide-bonded: cysteine 276–cysteine 300, cysteine 286–cysteine 313, and cysteine 301–cysteine 316. An N-linked (GlcNAc...) asparagine glycan is attached at asparagine 346. The EGF-like 2; calcium-binding domain maps to 352-392 (DINECAMPGMCRHGDCLNNPGSYRCVCPPGHSLGPSRTQCI). Cystine bridges form between cysteine 356–cysteine 367, cysteine 362–cysteine 376, cysteine 378–cysteine 391, cysteine 402–cysteine 425, cysteine 412–cysteine 437, cysteine 426–cysteine 440, and cysteine 427–cysteine 452. One can recognise a TB 2 domain in the interval 400-452 (SLCFRLVSTEHQCQHPLTTRLTRQLCCCSVGKAWGARCQRCPADGTAAFKEIC). The segment at 475–555 (FSLFLHPDGP…PTFHRFLPDL (81 aa)) is disordered. Residues 571 to 612 (ETDECRLNQNICGHGQCVPGPSDYSCHCNAGYRSHPQHRYCV) enclose the EGF-like 3 domain. Disulfide bonds link cysteine 575–cysteine 587, cysteine 582–cysteine 596, cysteine 598–cysteine 611, cysteine 617–cysteine 629, cysteine 622–cysteine 638, cysteine 661–cysteine 673, cysteine 667–cysteine 682, cysteine 684–cysteine 698, cysteine 745–cysteine 756, cysteine 751–cysteine 765, cysteine 767–cysteine 780, cysteine 786–cysteine 797, cysteine 792–cysteine 806, cysteine 808–cysteine 821, cysteine 827–cysteine 838, cysteine 833–cysteine 847, cysteine 849–cysteine 861, cysteine 867–cysteine 880, cysteine 874–cysteine 889, cysteine 891–cysteine 904, cysteine 916–cysteine 939, cysteine 926–cysteine 951, cysteine 940–cysteine 956, cysteine 941–cysteine 968, cysteine 994–cysteine 1007, cysteine 1002–cysteine 1016, cysteine 1018–cysteine 1031, cysteine 1037–cysteine 1048, cysteine 1043–cysteine 1057, cysteine 1059–cysteine 1072, cysteine 1113–cysteine 1127, and cysteine 1114–cysteine 1136. In terms of domain architecture, EGF-like 4; calcium-binding spans 613 to 656 (DVNECEAEPCGPGKGICMNTGGSYNCHCNRGYRLHVGAGGRSCV). In terms of domain architecture, EGF-like 5; calcium-binding spans 657 to 699 (DLNECTKPHLCGDGGFCINFPGHYKCNCYPGYRLKASRPPICE). The EGF-like 6; calcium-binding domain maps to 741-781 (DVNECSEGTPCSPGWCENLPGSYRCTCAQGYEPAQDGLSCI). An EGF-like 7; calcium-binding domain is found at 782 to 822 (DVDECEAGKVCQDGICTNTPGSFQCQCLSGYHLSRDRSRCE). Residues 823-861 (DIDECDFPAACIGGDCINTNGSYRCLCPQGHRLVGGRKC) form the EGF-like 8; calcium-binding domain. Asparagine 842 is a glycosylation site (N-linked (GlcNAc...) asparagine). Residues 863 to 905 (DIDECSQDPGLCLPHGACENLQGSYVCVCDEGFTLTQDQHGCE) enclose the EGF-like 9; calcium-binding domain. The 55-residue stretch at 914–968 (KECYLNFDDTVFCDSVLATNVTQQECCCSLGAGWGDHCEIYPCPVYSSAEFHSLC) folds into the TB 3 domain. Asparagine 933 is a glycosylation site (N-linked (GlcNAc...) asparagine). One can recognise an EGF-like 10; calcium-binding domain in the interval 990–1032 (DIDECILFGAEICKEGKCVNTQPGYECYCKQGFYYDGNLLECV). The EGF-like 11; calcium-binding domain occupies 1033–1072 (DVDECLDESNCRNGVCENTRGGYRCACTPPAEYSPAQRQC). The region spanning 1086 to 1136 (EVCWGQRGEDGMCMGPLAGPALTFDDCCCRQGRGWGTQCRPCPPRGTGSQC) is the TB 4 domain. Over residues 1138-1148 (TSQSESNSFWD) the composition is skewed to polar residues. The segment at 1138–1169 (TSQSESNSFWDTSPLLLGKSPRDEDSSEEDSD) is disordered. The EGF-like 12; calcium-binding domain maps to 1204-1231 (DIDECRELNQRGLLCKSERCVNTSGSFR). Cystine bridges form between cysteine 1208/cysteine 1223 and cysteine 1218/cysteine 1232. Asparagine 1225 carries N-linked (GlcNAc...) asparagine glycosylation.

Belongs to the LTBP family. In terms of assembly, forms part of the large latent transforming growth factor beta (TGFB1) precursor complex; removal is essential for activation of complex. Interacts with EFEMP2. Contains hydroxylated asparagine residues. Post-translationally, two intrachain disulfide bonds from the TB3 domain are rearranged upon TGFB1 binding, and form interchain bonds with TGFB1 propeptide, anchoring it to the extracellular matrix.

Its subcellular location is the secreted. The protein localises to the extracellular space. The protein resides in the extracellular matrix. In terms of biological role, key regulator of transforming growth factor beta (TGFB1, TGFB2 and TGFB3) that controls TGF-beta activation by maintaining it in a latent state during storage in extracellular space. Associates specifically via disulfide bonds with the Latency-associated peptide (LAP), which is the regulatory chain of TGF-beta, and regulates integrin-dependent activation of TGF-beta. In Mus musculus (Mouse), this protein is Latent-transforming growth factor beta-binding protein 3 (Ltbp3).